The sequence spans 1390 residues: MKKNSAFHNTQYSPKVVRRDYSKVHNKYNPLNLPGIQVNAYKQFLEKELEEIIGSYFPIKSPNGKYSVEFHGMKILDPQITKEEASAESKTYDASLYVNLSLVNHQTGTVKKISKKSAKSKAEGIYFADIPLMTENGAFIVNGIEKFVVAQIVRSPGAYILNKSQVKLSNSRKRNQEGYICEVFPSKGTLMLFYIAENKDFVQAVVRDVGGESAKVFSITTLLKAFGLSEIKIKEIFNNNDYILRSLESEFYNEKQILNEADIAQLIRDIESDRISKVKSLPIDQKWKNLVLDWYKLNQEKQELLNSSNPNPTKIESLNTHIGVVLRKLICEKAAKHVIQELSISTRSLDNVSQKEEISYQSILLQHFFQKKRYDLSSAGRHKFVRKLRVSERLYQRTIAQDIKDLDGNVVIKQGTLMLKEQLDLFKRLSKEKRLDIIKQIDFINPELNTQFTDVNTYEEVQIYVNNDLRNETTQIIGIDGSNESIETLTLADLISIVSYIVNLPFNIGLYDDIDHLGNKRLKLINELLKSKVQTGMMRIEKYIKDKLQTADGNNKLADQDAENDPDSDLGTKSSNDLTVKSVINPKPFQIVIKDFFNTHQLTQFLDQQNPLSELTNKRRISAMGPGGISREDPNLDIRDVHYSHYGRICPIETPEGMNIGLIMSLAFYATIDKNGFLMTPYLKVENGKITDKVEHLTALREDEYIIAEASSYMDVAKDGTINNEKIIARYRSSQDLYDPKQVDYIDVSPKQVVSVAASLIPFLENDDSSRALMGANMQRQATPLLKPYSPLVGTGVEYKIAQDSGMLVTAKNPGTVTYVDASKITVKGEDNKSTDYNLLKFVKSNKNTCYNQSPIVAVGDKIETNQALADGPSMKNGELALGQNVLVGFTTWSGYNYEDAVIISDRLFKDDVYSSIHIDEYTIECLRTKNGDEEITRDIPNISESAKRYLDEEGVIMVGAEVKEGDILVGKTSPKGQVELTPEEKLIQAILGDKVKQVRESSLKVPNGGDGIVAGIKRFSIANGDELEDDVLELVKVYVVQKRKIQIGDKVAGRHGNKGIISKIVAQEDMPHLEDGTPLDILLNPLGVPSRMNIGQIFELHLGYAARELAKAKLIEACFDKKLADQLDTVFGLEKSKTQSLIKNLVEHMKSIGVTSLAQTKNRVRTIDIDIVLKQLGLTYDDLAFKIATPVFEGVNMEDLKAIMSEAGIDPDKTEGKFKLIDGRTGEPFEKPISVGIMYMLKLDHMVDDKIHARAVGPYSKITQQPLGGKSQNGGQRFGEMEVWALQAYGAAHNLREILTIKSDDVRGRNMTYNAIVKGLSIPEPGVPESFKLLTKELQGLGMTLNVLYDDDSIENINNISVVDESLEPKIHDAEFDTFTLDDYNDDNF.

A disordered region spans residues 556-576 (KLADQDAENDPDSDLGTKSSN).

This sequence belongs to the RNA polymerase beta chain family. The RNAP catalytic core consists of 2 alpha, 1 beta, 1 beta' and 1 omega subunit. When a sigma factor is associated with the core the holoenzyme is formed, which can initiate transcription.

The catalysed reaction is RNA(n) + a ribonucleoside 5'-triphosphate = RNA(n+1) + diphosphate. Functionally, DNA-dependent RNA polymerase catalyzes the transcription of DNA into RNA using the four ribonucleoside triphosphates as substrates. This chain is DNA-directed RNA polymerase subunit beta, found in Mycoplasmoides gallisepticum (strain R(low / passage 15 / clone 2)) (Mycoplasma gallisepticum).